Consider the following 950-residue polypeptide: Leucine--tRNA ligase (950 aa).

The 'HIGH' region signature appears at Pro72 to His83. A 'KMSKS' region motif is present at residues Lys722–Ser726. Lys725 contributes to the ATP binding site.

It belongs to the class-I aminoacyl-tRNA synthetase family.

The protein localises to the cytoplasm. It catalyses the reaction tRNA(Leu) + L-leucine + ATP = L-leucyl-tRNA(Leu) + AMP + diphosphate. This is Leucine--tRNA ligase from Mycobacterium sp. (strain JLS).